The sequence spans 2763 residues: MDIIPPIAVTVAGVGSRNQFDGALGPASGLSCLRTSLSFLHMTYAHGINATLSSDMIDGCLQEGAAWTTDLSNMGRGVPDMCALVDLPNRISYIKLGDTTSTCCVLSRIYGDSHFFTVPDEGFMCTQIPARAFFDDVWMGREESYTIITVDSTGMAIYRQGNISFIFDPHGHGTIGQAVVVRVNTTDVYSYIASEYTHRPDNVESQWAAALVFFVTANDGPVSEEALSSAVTLIYGSCDTYFTDEQYCEKLVTAQHPLLLSPPNSTTIVLNKSSIVPLHQNVGESVSLEATLHSTLTNTVALDPRCSYSEVDPWHAVLETTSTGSGVLDCRRRRRPSWTPPSSEENLACIDDGLVNNTHSTDNLHKPAKKVLKFKPTVDVPDKTQVAHVLPRLREVANTPDVVLNVSNVDTPESSPTFSRNMNVGSSLKDRKPFLFEQSGDVNMVVEKLLQHGHEISNGYVQNAVGTLDTVITGHTNVPIWVTRPLVMPDEKDPLELFINLTILRLTGFVVENGTRTHHGATSVVSDFIGPLGEILTGFPSAAELIRVTSLILTNMPGAEYAIKTVLRKKCTIGMLIIAKFGLVAMRVQDTTGALHAELDVLEADLGGSSPIDLYSRLSTGLISILNSPIISHPGLFAELIPTRTGSLSERIRLLCELVSARETRYMREHTALVSSVKALENALRSTRNKIDAIQIPEVPQEPPEETDIPPEELIRRVYEIRSEVTMLLTSAVTEYFTRGVLYSTRALIAEQSPRRFRVATASTAPIQRLLDSLPEFDAKLTAIISSLSIHPPPETIQNLPVVSLLKELIKEGEDLNTDTALVSWLSVVGEAQTAGYLSRREFDELSRTIKTINTRATQRASAEAELSCFNTLSAAVDQAVKDYETYNNGEVKYPEITRDDLLATIVRATDDLVRQIKILSDPMIQSGLQPSIKRRLETRLKEVQTYANEARTTQDTIKSRKQAAYNKLGGLLRPVTGFVGLRAAVDLLPELASELDVQGALVNLRTKVLEAPVEIRSQLTGDFWALFNQYRDILEHPGNARTSVLGGLGACFTAIIEIVPIPTEYRPSLLAFFGDVADVLASDIATVSTNPESESAINAVVATLSKATLVSSTVPALSFVLSLYKKYQALQQEITNTHKLTELQKQLGDDFSTLAVSSGHLKFISSSNVDDYEINDAILSIQTNVHALMDTVKLVEVELQKLPPHCIAGTSTLSRVVKDLHKLVTMAHEKKEQAKVLITDCERAHKQQTTRVLYERWTRDIIACLEAMETRHIFNGTELARLRDMAAAGGFDIHAVYPQARQVVAACETTAVTALDTVFRHNPYTPENTNIPPPLALLRGLTWFDDFSITAPVFTVMFPGVSIEGLLLLMRIRAVVLLSADTSINGIPNYRDMILRTSGDLLQIPALAGYVDFYTRSYDQFITESVTLSELRADIRQAAGAKLTEANKALEEVTHVRAHETAKLALKEGVFITLPSEGLLIRAIEYFTTFDHKRFIGTAYERVLQTMVDRDLKEANAELAQFRMVCQATKNRAIQILQNIVDTANATEQQEDVDFTNLKTLLKLTPPPKTIALAIDRSTSVQDIVTQFALLLGRLEEETGTLDIQAVDWMYQARNIIDSHPLSVRIDGTGPLHTYKDRVDKLYALRTKLDLLRRRIETGEVTWDDAWTTFKRETGDMLASGDTYATSVDSIKALQASASVVDMLCSEPEFFLLPVETKNRLQKKQQERKTALDVVLQKQRQFEETASRLRALIERIPTESDHDVLRMLLRDFDQFTHLPIWIKTQYMTFRNLLMVRLGLYASYAEIFPPASPNGVFAPIPAMSGVCLEDQSRCIRARVAAFMGEASVVQTFREARSSIDALFGKNLTFYLDTDGVPLRYRVCYKSVGVKLGTMLCSQGGLSLRPALPDEGIVEETTLSALRVANEVNELRIEYESAIKSGFSAFSTFVRHRHAEWGKTNARRAIAEIYAGLITTTLTRQYGVHWDKLIYSFEKHHLTSVMGNGLTKPIQRRGDVRVLELTLSDIVTILVATTPVHLLNFARLDLIKQHEYMARTLRPVIEAAFRGRLLVRSLDGDPKGNARAFFNAAPSKHKLPLALGSNQDPTGGRIFAFRMADWKLVKMPQKITDPFAPWQLSPPPGVKANVDAVTRIMATDRLATITVLGRMCLPPISLVSMWNTLQPEEFAYRTQDDVDIIVDARLDLSSTLNARFDTAPSNTTLEWNTDRKVITDAYIQTGATTVFTVTGAAPTHVSNVTAFDIATTAILFGAPLVIAMELTSVFSQNSGLTLGLKLFDSRHMATDSGISSAVSPDIVSWGLRLLHMDPHPIENACLIVQLEKLSALIANKPLTNNPPCLLLLDEHMNPSYVLWERKDSIPAPDYVVFWGPESLIDLPYIDSDEDSFPSCPDDPFYSQIIAGYAPQGPPNLDTTDFYPTEPLFKSPVQVVRSSKCKKMPVRPAQPAQPAQPAQPAQTVQPAQPIEPGTQIVVQNFKKPQSVKTTLSQKDIPLYVETESETAVLIPKQLTTSIKTTVCKSITPPNNQLSDWKNNPQQNQTLNQAFSKPILEITSIPTDDSISYRTWIEKSNQTQKRHQNDPRMYNSKTVFHPVNNQLPSWVDTAADAPQTDLLTNYKTRQPSPNFPRDVHTWGVSSNPFNSPNRDLYQSDFSEPSDGYSSESENSIVLSLDEHRSCRVPRHVRVVNADVVTGRRYVRGTALGALALLSQACRRMIDNVRYTRKLLMDHTEDIFQGLGYVKLLLDGTYI.

The segment at 1–247 (MDIIPPIAVT…CDTYFTDEQY (247 aa)) is deubiquitination activity. A Peptidase C76 domain is found at 12–237 (AGVGSRNQFD…SSAVTLIYGS (226 aa)). Catalysis depends on residues Cys-32, Asp-168, and His-170. The tract at residues 495–523 (LELFINLTILRLTGFVVENGTRTHHGATS) is interaction with inner tegument protein. The interval 2456 to 2476 (VRPAQPAQPAQPAQPAQTVQP) is disordered. A run of 5 repeats spans residues 2458–2460 (PAQ), 2461–2463 (PAQ), 2464–2466 (PAQ), 2467–2469 (PAQ), and 2470–2472 (PAQ). Residues 2458-2472 (PAQPAQPAQPAQPAQ) form a 5 X 3 AA repeats of P-A-Q region. Over residues 2459–2476 (AQPAQPAQPAQPAQTVQP) the composition is skewed to low complexity.

Belongs to the herpesviridae large tegument protein family. As to quaternary structure, interacts with host CUL1 and CUL4A; these interactions inhibit the E3 ligase activity of cullins. Interacts with inner tegument protein. Interacts with capsid vertex specific component CVC2. Interacts with the major capsid protein/MCP.

The protein localises to the virion tegument. It is found in the host cytoplasm. The protein resides in the host nucleus. It carries out the reaction Thiol-dependent hydrolysis of ester, thioester, amide, peptide and isopeptide bonds formed by the C-terminal Gly of ubiquitin (a 76-residue protein attached to proteins as an intracellular targeting signal).. In terms of biological role, large tegument protein that plays multiple roles in the viral cycle. During viral entry, remains associated with the capsid while most of the tegument is detached and participates in the capsid transport toward the host nucleus. Plays a role in the routing of the capsid at the nuclear pore complex and subsequent uncoating. Within the host nucleus, acts as a deneddylase and promotes the degradation of nuclear CRLs (cullin-RING ubiquitin ligases) and thereby stabilizes nuclear CRL substrates, while cytoplasmic CRLs remain unaffected. These modifications prevent host cell cycle S-phase progression and create a favorable environment allowing efficient viral genome replication. Participates later in the secondary envelopment of capsids. Indeed, plays a linker role for the association of the outer viral tegument to the capsids together with the inner tegument protein. This Homo sapiens (Human) protein is Large tegument protein deneddylase.